The following is a 1117-amino-acid chain: Cytospin-A (1117 aa).

3 disordered regions span residues 1-176, 293-323, and 358-390; these read MKKA…NQIS, SLSPEITPGNQSDGGGTLTSSVEGSAPGSVE, and SSDDALDAPSSSESEGIPSIERSRKGSSGNASE. 2 stretches are compositionally biased toward low complexity: residues 45 to 72 and 99 to 119; these read TTASLSKTKSSDDLLAGMAGGVTVTNGV and KISTGTSSSTKRSTSIGNKES. 2 stretches are compositionally biased toward basic and acidic residues: residues 120–131 and 158–171; these read SSTRERLRERTR and TTTECDVRMSKSKS. Residues 168–280 are a coiled coil; the sequence is KSKSDNQISD…LNALGFSLEQ (113 aa). A compositionally biased stretch (polar residues) spans 293-303; it reads SLSPEITPGNQ. Low complexity predominate over residues 358 to 377; sequence SSDDALDAPSSSESEGIPSI. Serine 384, serine 385, and serine 389 each carry phosphoserine. Coiled coils occupy residues 394–449 and 487–807; these read ACLT…MESL and RYME…RGRV. A disordered region spans residues 852–878; it reads SQVPNPTAAAIPRTPLSPSPMKTPPAA. 3 positions are modified to phosphoserine: serine 868, serine 881, and serine 887. The segment at 920-997 is disordered; it reads TSSTSRPASL…PTTRSRIREE (78 aa). A compositionally biased stretch (basic and acidic residues) spans 946 to 956; it reads RSSEEMKRDIS. Over residues 971–990 the composition is skewed to low complexity; the sequence is TTSPQLSLSSSPTASVTPTT. The 106-residue stretch at 1011–1116 folds into the Calponin-homology (CH) domain; that stretch reads GSKRNALLKW…YVTAIYKYFE (106 aa).

Belongs to the cytospin-A family. May interact with both microtubules and actin cytoskeleton.

The protein resides in the cytoplasm. The protein localises to the cytoskeleton. Its subcellular location is the spindle. It localises to the cell junction. It is found in the gap junction. Involved in cytokinesis and spindle organization. May play a role in actin cytoskeleton organization and microtubule stabilization and hence required for proper cell adhesion and migration. This Canis lupus familiaris (Dog) protein is Cytospin-A (SPECC1L).